Reading from the N-terminus, the 213-residue chain is GTP cyclohydrolase 1 (213 aa).

Residues Cys104, His107, and Cys175 each coordinate Zn(2+).

It belongs to the GTP cyclohydrolase I family. As to quaternary structure, toroid-shaped homodecamer, composed of two pentamers of five dimers.

The catalysed reaction is GTP + H2O = 7,8-dihydroneopterin 3'-triphosphate + formate + H(+). It participates in cofactor biosynthesis; 7,8-dihydroneopterin triphosphate biosynthesis; 7,8-dihydroneopterin triphosphate from GTP: step 1/1. The chain is GTP cyclohydrolase 1 from Brucella abortus (strain 2308).